Here is a 445-residue protein sequence, read N- to C-terminus: Selenocysteine lyase (445 aa).

M1 is modified (N-acetylmethionine). The disordered stretch occupies residues 1–28 (MEAAVAPGRDAPAPAASQPSGCGKHNSP). Phosphoserine is present on S129. K259 carries the post-translational modification N6-(pyridoxal phosphate)lysine. Residue C388 is the S-selanylcysteine intermediate of the active site.

Belongs to the class-V pyridoxal-phosphate-dependent aminotransferase family. As to quaternary structure, homodimer. Pyridoxal 5'-phosphate is required as a cofactor.

Its subcellular location is the cytoplasm. It is found in the cytosol. It carries out the reaction L-selenocysteine + AH2 = hydrogenselenide + L-alanine + A + H(+). Functionally, catalyzes the decomposition of L-selenocysteine to L-alanine and elemental selenium. The protein is Selenocysteine lyase (SCLY) of Homo sapiens (Human).